An 89-amino-acid polypeptide reads, in one-letter code: Small ribosomal subunit protein uS14 (89 aa).

Belongs to the universal ribosomal protein uS14 family. In terms of assembly, part of the 30S ribosomal subunit. Contacts proteins S3 and S10.

In terms of biological role, binds 16S rRNA, required for the assembly of 30S particles and may also be responsible for determining the conformation of the 16S rRNA at the A site. This is Small ribosomal subunit protein uS14 from Akkermansia muciniphila (strain ATCC BAA-835 / DSM 22959 / JCM 33894 / BCRC 81048 / CCUG 64013 / CIP 107961 / Muc).